The chain runs to 166 residues: NAD(P)H-quinone oxidoreductase subunit I, chloroplastic (166 aa).

4Fe-4S ferredoxin-type domains follow at residues 55-84 (GRIH…VDWK) and 95-124 (LNYS…MTEE). 8 residues coordinate [4Fe-4S] cluster: Cys-64, Cys-67, Cys-70, Cys-74, Cys-104, Cys-107, Cys-110, and Cys-114.

Belongs to the complex I 23 kDa subunit family. NDH is composed of at least 16 different subunits, 5 of which are encoded in the nucleus. The cofactor is [4Fe-4S] cluster.

The protein localises to the plastid. It localises to the chloroplast thylakoid membrane. The catalysed reaction is a plastoquinone + NADH + (n+1) H(+)(in) = a plastoquinol + NAD(+) + n H(+)(out). It catalyses the reaction a plastoquinone + NADPH + (n+1) H(+)(in) = a plastoquinol + NADP(+) + n H(+)(out). NDH shuttles electrons from NAD(P)H:plastoquinone, via FMN and iron-sulfur (Fe-S) centers, to quinones in the photosynthetic chain and possibly in a chloroplast respiratory chain. The immediate electron acceptor for the enzyme in this species is believed to be plastoquinone. Couples the redox reaction to proton translocation, and thus conserves the redox energy in a proton gradient. The polypeptide is NAD(P)H-quinone oxidoreductase subunit I, chloroplastic (Rensonia salvadorica).